The primary structure comprises 1372 residues: DNA-directed RNA polymerase subunit beta (1372 aa).

This sequence belongs to the RNA polymerase beta chain family. In terms of assembly, the RNAP catalytic core consists of 2 alpha, 1 beta, 1 beta' and 1 omega subunit. When a sigma factor is associated with the core the holoenzyme is formed, which can initiate transcription.

The catalysed reaction is RNA(n) + a ribonucleoside 5'-triphosphate = RNA(n+1) + diphosphate. Its function is as follows. DNA-dependent RNA polymerase catalyzes the transcription of DNA into RNA using the four ribonucleoside triphosphates as substrates. This Nitratidesulfovibrio vulgaris (strain ATCC 29579 / DSM 644 / CCUG 34227 / NCIMB 8303 / VKM B-1760 / Hildenborough) (Desulfovibrio vulgaris) protein is DNA-directed RNA polymerase subunit beta.